Consider the following 122-residue polypeptide: Vacuolar transporter chaperone complex subunit 1 (122 aa).

The Cytoplasmic portion of the chain corresponds to 1-32; it reads MSTQPLLQTTPGKRIALPVRVEPKVFFANERT. A helical transmembrane segment spans residues 33 to 53; sequence FLSWLSFAVVLGGLSVGLLNF. Residues 54 to 59 are Vacuolar-facing; the sequence is GDRIGK. The helical transmembrane segment at 60–80 threads the bilayer; the sequence is ISAGLFTIVAIGTMGYALGIY. At 81 to 101 the chain is on the cytoplasmic side; the sequence is HWRASAIRRRGSGPYDDRLGP. A helical membrane pass occupies residues 102–122; sequence TILCFVLLAAIITNFVLRMLF.

The protein belongs to the VTC1 family. As to quaternary structure, the VTC core complex is an integral membrane heterooligomer composed of at least the catalytic subunit vtc4 and the accessory subunits vtc1 and vtc2. vtc1 is a small membrane protein without hydrophilic domain. Vtc2 and vtc4 are related and have 2 hydrophilic domains that face the cytosol, an N-terminal SPX domain and the central core domain. The central core in vtc4 is the catalytic domain. Vtc1 interacts with GTP-bound Ras-like cdc42, which is subsequently inactivated.

It is found in the vacuole membrane. Its function is as follows. Accessory subunit of the vacuolar transporter chaperone (VTC) complex. The VTC complex acts as a vacuolar polyphosphate polymerase that catalyzes the synthesis of inorganic polyphosphate (polyP) via transfer of phosphate from ATP to a growing polyP chain, releasing ADP. VTC exposes its catalytic domain vtc4 to the cytosol, where the growing polyP chain winds through a tunnel-shaped pocket, integrating cytoplasmic polymer synthesis with polyP membrane translocation. The VTC complex carries 9 vacuolar transmembrane domains, which are likely to constitute the translocation channel into the organelle lumen. PolyP synthesis is tightly coupled to its transport into the vacuole lumen, in order to avoid otherwise toxic intermediates in the cytosol, and it depends on the proton gradient across the membrane, formed by V-ATPase. Vtc1 contributes only 3 transmembrane domains to the complex. The VTC complex also plays a role in vacuolar membrane fusion. Involved in the control of cell polarity. This chain is Vacuolar transporter chaperone complex subunit 1, found in Schizosaccharomyces pombe (strain 972 / ATCC 24843) (Fission yeast).